Reading from the N-terminus, the 285-residue chain is Protoheme IX farnesyltransferase (285 aa).

8 helical membrane passes run Arg19–Met39, Pro40–Ile60, Ala90–Pro110, Leu111–Leu131, Ser135–Ala155, Ser165–Leu185, Ile220–Ile240, and Phe265–Ile285.

Belongs to the UbiA prenyltransferase family. Protoheme IX farnesyltransferase subfamily.

It localises to the cell membrane. The catalysed reaction is heme b + (2E,6E)-farnesyl diphosphate + H2O = Fe(II)-heme o + diphosphate. It participates in porphyrin-containing compound metabolism; heme O biosynthesis; heme O from protoheme: step 1/1. Converts heme B (protoheme IX) to heme O by substitution of the vinyl group on carbon 2 of heme B porphyrin ring with a hydroxyethyl farnesyl side group. The sequence is that of Protoheme IX farnesyltransferase from Metallosphaera sedula (strain ATCC 51363 / DSM 5348 / JCM 9185 / NBRC 15509 / TH2).